The chain runs to 109 residues: MLEPFQILSICSFILSALHFMGWTIGHLNQIKRGVNLKIRIRNPNKETINREVSILRHSYQKEIQAKETIKEVLSDNMERLSDHIVIEGLSAEEIIKMGETVLEVEELH.

Topologically, residues 1–4 (MLEP) are virion surface. A helical; Signal-anchor for type III membrane protein transmembrane segment spans residues 5–27 (FQILSICSFILSALHFMGWTIGH). At 28–109 (LNQIKRGVNL…ETVLEVEELH (82 aa)) the chain is on the intravirion side. Residues 59–83 (SYQKEIQAKETIKEVLSDNMERLSD) adopt a coiled-coil conformation.

As to quaternary structure, homotetramer. In terms of processing, phosphorylated by host.

It localises to the virion membrane. Its subcellular location is the host cell membrane. Its function is as follows. Forms presumably a highly low-pH gated proton-selective channel. Trp-23 may function as a minimalistic gate that opens and closes the pore. When the environmental pH is lower than a threshold, the BM2 channel would be activated and selectively transport protons across the membrane from the extracellular side to the cytoplasmic side. Crucial for the uncoating process. When the virion is internalized into the endosome, the channel acidifies the virion's interior, promoting the dissociation of matrix protein 1 (M1) from the ribonucleoprotein (RNP) thus allowing the transport of the RNP from the virion into the cell's nucleus. Also plays a role in viral proteins secretory pathway. Elevates the intravesicular pH of normally acidic compartments, such as trans-Golgi network, preventing newly formed hemagglutinin from premature switching to the fusion-active conformation. Plays a crucial role in virion assembly. Expressed in the late phase of the infection. This is Matrix protein 2 (M) from Homo sapiens (Human).